Consider the following 430-residue polypeptide: Serine hydroxymethyltransferase 1 (430 aa).

(6S)-5,6,7,8-tetrahydrofolate contacts are provided by residues L132 and 136 to 138; that span reads GHL. K241 bears the N6-(pyridoxal phosphate)lysine mark.

Belongs to the SHMT family. In terms of assembly, homodimer. Pyridoxal 5'-phosphate is required as a cofactor.

Its subcellular location is the cytoplasm. The enzyme catalyses (6R)-5,10-methylene-5,6,7,8-tetrahydrofolate + glycine + H2O = (6S)-5,6,7,8-tetrahydrofolate + L-serine. The protein operates within one-carbon metabolism; tetrahydrofolate interconversion. Its pathway is amino-acid biosynthesis; glycine biosynthesis; glycine from L-serine: step 1/1. Catalyzes the reversible interconversion of serine and glycine with tetrahydrofolate (THF) serving as the one-carbon carrier. This reaction serves as the major source of one-carbon groups required for the biosynthesis of purines, thymidylate, methionine, and other important biomolecules. Also exhibits THF-independent aldolase activity toward beta-hydroxyamino acids, producing glycine and aldehydes, via a retro-aldol mechanism. The chain is Serine hydroxymethyltransferase 1 from Bordetella parapertussis (strain 12822 / ATCC BAA-587 / NCTC 13253).